We begin with the raw amino-acid sequence, 338 residues long: Putative transposase for insertion sequence element IS4SA (338 aa).

It belongs to the transposase 11 family.

The chain is Putative transposase for insertion sequence element IS4SA from Synechocystis sp. (strain ATCC 27184 / PCC 6803 / Kazusa).